The following is a 262-amino-acid chain: ATP synthase subunit a (262 aa).

Transmembrane regions (helical) follow at residues 26-46, 86-106, 130-150, 204-226, and 240-260; these read VHID…FVFS, VAPL…IDLI, DISA…FYTI, LIFI…GIPL, and LQAF…YNKA.

It belongs to the ATPase A chain family. In terms of assembly, F-type ATPases have 2 components, CF(1) - the catalytic core - and CF(0) - the membrane proton channel. CF(1) has five subunits: alpha(3), beta(3), gamma(1), delta(1), epsilon(1). CF(0) has three main subunits: a(1), b(2) and c(9-12). The alpha and beta chains form an alternating ring which encloses part of the gamma chain. CF(1) is attached to CF(0) by a central stalk formed by the gamma and epsilon chains, while a peripheral stalk is formed by the delta and b chains.

The protein resides in the cell inner membrane. Its function is as follows. Key component of the proton channel; it plays a direct role in the translocation of protons across the membrane. The sequence is that of ATP synthase subunit a from Haemophilus influenzae (strain PittEE).